Reading from the N-terminus, the 295-residue chain is 4-hydroxy-tetrahydrodipicolinate synthase (295 aa).

Thr46 contributes to the pyruvate binding site. The Proton donor/acceptor role is filled by Tyr134. Lys162 functions as the Schiff-base intermediate with substrate in the catalytic mechanism. Ile205 serves as a coordination point for pyruvate.

Belongs to the DapA family. In terms of assembly, homotetramer; dimer of dimers.

Its subcellular location is the cytoplasm. It catalyses the reaction L-aspartate 4-semialdehyde + pyruvate = (2S,4S)-4-hydroxy-2,3,4,5-tetrahydrodipicolinate + H2O + H(+). It participates in amino-acid biosynthesis; L-lysine biosynthesis via DAP pathway; (S)-tetrahydrodipicolinate from L-aspartate: step 3/4. Its function is as follows. Catalyzes the condensation of (S)-aspartate-beta-semialdehyde [(S)-ASA] and pyruvate to 4-hydroxy-tetrahydrodipicolinate (HTPA). The chain is 4-hydroxy-tetrahydrodipicolinate synthase from Anaeromyxobacter sp. (strain K).